A 76-amino-acid chain; its full sequence is Small ribosomal subunit protein bS18 (76 aa).

It belongs to the bacterial ribosomal protein bS18 family. As to quaternary structure, part of the 30S ribosomal subunit. Forms a tight heterodimer with protein bS6.

Its function is as follows. Binds as a heterodimer with protein bS6 to the central domain of the 16S rRNA, where it helps stabilize the platform of the 30S subunit. The protein is Small ribosomal subunit protein bS18 of Aeromonas salmonicida (strain A449).